The following is a 495-amino-acid chain: Lysine--tRNA ligase (495 aa).

2 residues coordinate Mg(2+): Glu-406 and Glu-413.

Belongs to the class-II aminoacyl-tRNA synthetase family. Homodimer. The cofactor is Mg(2+).

The protein resides in the cytoplasm. It carries out the reaction tRNA(Lys) + L-lysine + ATP = L-lysyl-tRNA(Lys) + AMP + diphosphate. This is Lysine--tRNA ligase (lysS) from Staphylococcus aureus.